Here is an 87-residue protein sequence, read N- to C-terminus: Glutaredoxin (87 aa).

In terms of domain architecture, Glutaredoxin spans 1-87 (MFVVIFGRPG…LMKEQFGIVA (87 aa)). Cysteines 11 and 14 form a disulfide.

This sequence belongs to the glutaredoxin family. Monomer.

The protein localises to the cytoplasm. Its function is as follows. Has a glutathione-disulfide oxidoreductase activity in the presence of NADPH and glutathione reductase. Reduces low molecular weight disulfides and proteins. This Haemophilus influenzae (strain ATCC 51907 / DSM 11121 / KW20 / Rd) protein is Glutaredoxin (grxA).